A 1195-amino-acid chain; its full sequence is Voltage-gated inwardly rectifying potassium channel KCNH7 (1195 aa).

The Cytoplasmic portion of the chain corresponds to 1-412 (MPVRRGHVAP…YSPFKAVWDW (412 aa)). The PAS domain maps to 41–70 (IIYCNDGFCEMTGFSRPDVMQKPCTCDFLH). The 53-residue stretch at 92 to 144 (RKVEVTYYHKNGSTFICNTHIIPVKNQEGVAMMFIINFEYVTDEENAATPERV) folds into the PAC domain. The residue at position 174 (S174) is a Phosphoserine. Residues 194 to 216 (SVAMKHFKSPTKESCSPSEADDT) form a disordered region. S238 and S319 each carry phosphoserine. Residues 413 to 433 (LILLLVIYTAIFTPYSAAFLL) form a helical membrane-spanning segment. The Extracellular portion of the chain corresponds to 434–449 (NDREEQKRRECGYSCS). Residues 450–470 (PLNVVDLIVDIMFIIDILINF) form a helical membrane-spanning segment. Residues 471–494 (RTTYVNQNEEVVSDPAKIAIHYFK) lie on the Cytoplasmic side of the membrane. A helical membrane pass occupies residues 495-515 (GWFLIDMVAAIPFDLLIFGSG). The Extracellular portion of the chain corresponds to 516 to 521 (SDETTT). A helical; Voltage-sensor membrane pass occupies residues 522–542 (LIGLLKTARLLRLVRVARKLD). Residues 543–549 (RYSEYGA) lie on the Cytoplasmic side of the membrane. Residues 550 to 570 (AVLMLLMCIFALIAHWLACIW) form a helical membrane-spanning segment. Residues 571–614 (YAIGNVERPYLTDKIGWLDSLGTQIGKRYNDSDSSSGPSIKDKY) lie on the Extracellular side of the membrane. Residue N600 is glycosylated (N-linked (GlcNAc...) asparagine). An intramembrane region (pore-forming) is located at residues 615-635 (VTALYFTFSSLTSVGFGNVSP). The Selectivity filter signature appears at 627–632 (SVGFGN). The Extracellular segment spans residues 636–641 (NTNSEK). The chain crosses the membrane as a helical span at residues 642–662 (IFSICVMLIGSLMYASIFGNV). Topologically, residues 663–1195 (SAIIQRLYSG…HVSDPGLPGK (533 aa)) are cytoplasmic. The cNMP-binding domain stretch occupies residues 745-845 (AFRGASKGCL…IQREDLLEVL (101 aa)). Residues 870–915 (AKSQSVNDSEGDTGKLRRRRLSFESEGEKDFSKENSANDADDSTDT) are disordered. Positions 890-902 (LSFESEGEKDFSK) are enriched in basic and acidic residues. Residues S891 and S894 each carry the phosphoserine modification. The stretch at 1027-1054 (YGEVEQRLDLLQEQLNRLESQMTTDIQA) forms a coiled coil.

This sequence belongs to the potassium channel family. H (Eag) (TC 1.A.1.20) subfamily. Kv11.3/KCNH7 sub-subfamily. As to quaternary structure, the potassium channel is probably composed of a homo- or heterotetrameric complex of pore-forming alpha subunits that can associate only within their subfamily.

The protein resides in the cell membrane. It catalyses the reaction K(+)(in) = K(+)(out). Functionally, pore-forming (alpha) subunit of voltage-gated inwardly rectifying potassium channel. Exhibits faster activation and deactivation kinetics and slow inactivation at membrane potentials positive to 240 mV, resulting in the weakest inward rectification. In Mus musculus (Mouse), this protein is Voltage-gated inwardly rectifying potassium channel KCNH7.